Here is a 284-residue protein sequence, read N- to C-terminus: Diaminopimelate epimerase (284 aa).

Substrate is bound by residues asparagine 14 and asparagine 67. Cysteine 76 acts as the Proton donor in catalysis. Substrate-binding positions include 77-78, asparagine 166, asparagine 199, and 217-218; these read GN and ER. The active-site Proton acceptor is the cysteine 226. 227 to 228 is a binding site for substrate; the sequence is GT.

This sequence belongs to the diaminopimelate epimerase family. As to quaternary structure, homodimer.

The protein localises to the cytoplasm. The enzyme catalyses (2S,6S)-2,6-diaminopimelate = meso-2,6-diaminopimelate. It participates in amino-acid biosynthesis; L-lysine biosynthesis via DAP pathway; DL-2,6-diaminopimelate from LL-2,6-diaminopimelate: step 1/1. Catalyzes the stereoinversion of LL-2,6-diaminopimelate (L,L-DAP) to meso-diaminopimelate (meso-DAP), a precursor of L-lysine and an essential component of the bacterial peptidoglycan. The chain is Diaminopimelate epimerase from Bacillus subtilis (strain 168).